The sequence spans 345 residues: Phosphoribosylformylglycinamidine cyclo-ligase (345 aa).

The protein belongs to the AIR synthase family.

It is found in the cytoplasm. It catalyses the reaction 2-formamido-N(1)-(5-O-phospho-beta-D-ribosyl)acetamidine + ATP = 5-amino-1-(5-phospho-beta-D-ribosyl)imidazole + ADP + phosphate + H(+). It functions in the pathway purine metabolism; IMP biosynthesis via de novo pathway; 5-amino-1-(5-phospho-D-ribosyl)imidazole from N(2)-formyl-N(1)-(5-phospho-D-ribosyl)glycinamide: step 2/2. The polypeptide is Phosphoribosylformylglycinamidine cyclo-ligase (Pectobacterium atrosepticum (strain SCRI 1043 / ATCC BAA-672) (Erwinia carotovora subsp. atroseptica)).